Reading from the N-terminus, the 195-residue chain is 3-isopropylmalate dehydratase small subunit (195 aa).

Belongs to the LeuD family. LeuD type 1 subfamily. Heterodimer of LeuC and LeuD.

The catalysed reaction is (2R,3S)-3-isopropylmalate = (2S)-2-isopropylmalate. Its pathway is amino-acid biosynthesis; L-leucine biosynthesis; L-leucine from 3-methyl-2-oxobutanoate: step 2/4. Catalyzes the isomerization between 2-isopropylmalate and 3-isopropylmalate, via the formation of 2-isopropylmaleate. The chain is 3-isopropylmalate dehydratase small subunit from Koribacter versatilis (strain Ellin345).